Reading from the N-terminus, the 172-residue chain is uncharacterized protein (172 aa).

Residues 1–101 (MEHVSKRSIG…RYDINTRPLV (101 aa)) are Lumenal-facing. A helical transmembrane segment spans residues 102 to 122 (VVLAISIVFFGCLLVLKDIII). Over 123 to 145 (QSSENILSVSKWKIIGASFMGTP) the chain is Cytoplasmic. Residues 146–164 (YTGLLTGLVGPLLSPFSAV) form a helical membrane-spanning segment. Topologically, residues 165-172 (SSWLSFIF) are lumenal.

It is found in the endoplasmic reticulum membrane. This is an uncharacterized protein from Saccharomyces cerevisiae (strain ATCC 204508 / S288c) (Baker's yeast).